Reading from the N-terminus, the 238-residue chain is Ribitol-5-phosphate cytidylyltransferase (238 aa).

CTP contacts are provided by residues 7 to 10 (LAGG) and 81 to 87 (GDDRNHS).

It belongs to the IspD/TarI cytidylyltransferase family. TarI subfamily.

The catalysed reaction is D-ribitol 5-phosphate + CTP + H(+) = CDP-L-ribitol + diphosphate. It functions in the pathway cell wall biogenesis; poly(ribitol phosphate) teichoic acid biosynthesis. Functionally, catalyzes the transfer of the cytidylyl group of CTP to D-ribitol 5-phosphate. This is Ribitol-5-phosphate cytidylyltransferase from Staphylococcus epidermidis (strain ATCC 12228 / FDA PCI 1200).